A 232-amino-acid chain; its full sequence is U2 small nuclear ribonucleoprotein B'' (232 aa).

An RRM 1 domain is found at 10–89 (QTVYLRNLNE…KRMRVQYAKT (80 aa)). Residues 90–159 (RSDCLATEDG…QEPPAPPNNI (70 aa)) form a disordered region. Residues 108 to 123 (KKQEEKAAEKKRRAEE) are compositionally biased toward basic and acidic residues. Residues 127–151 (SGPNAAAQSNGTGYQASRLGKTSQE) are compositionally biased toward polar residues. Positions 158-232 (NILFIQNLPA…NPMAISYAKK (75 aa)) constitute an RRM 2 domain.

It belongs to the RRM U1 A/B'' family. In terms of assembly, component of the spliceosome where it is associated with snRNP U2.

The protein resides in the nucleus. Its subcellular location is the cajal body. It localises to the nucleoplasm. The protein localises to the cytoplasm. Involved in nuclear pre-mRNA splicing. In Oryza sativa subsp. japonica (Rice), this protein is U2 small nuclear ribonucleoprotein B''.